Here is a 982-residue protein sequence, read N- to C-terminus: Probable DNA-directed RNA polymerase (982 aa).

It belongs to the RNA polymerase beta chain family.

The catalysed reaction is RNA(n) + a ribonucleoside 5'-triphosphate = RNA(n+1) + diphosphate. In terms of biological role, the presence of the two linear plasmids, termed pGKL1 and pGKL2, in strains of Kluyveromyces lactis confers the killer phenotype to the host cell, by promoting the secretion of a toxin able to inhibit the growth of sensitive strains. This is Probable DNA-directed RNA polymerase from Kluyveromyces lactis (strain ATCC 8585 / CBS 2359 / DSM 70799 / NBRC 1267 / NRRL Y-1140 / WM37) (Yeast).